A 492-amino-acid chain; its full sequence is G protein-activated inward rectifier potassium channel 1 (492 aa).

The Cytoplasmic portion of the chain corresponds to 1-72 (MSALRRKLGD…LFTTLVDLKW (72 aa)). Residues 16 to 35 (STSASGGGLPPPRAAPRGKR) form a disordered region. The chain crosses the membrane as a helical span at residues 73–97 (RWNLFIFVLTYTVAWLFMASMWWVI). Residues 98-121 (AYMRGDLNKAHDDSYTPCVANVYN) lie on the Extracellular side of the membrane. An intramembrane region (helical; Pore-forming) is located at residues 122–133 (FPSAFLFFIETE). Positions 134 to 140 (ATIGYGY) form an intramembrane region, pore-forming. The Selectivity filter signature appears at 135-140 (TIGYGY). Topologically, residues 141–149 (RYITDKCPE) are extracellular. Residues 150 to 171 (GIILFLFQSILGSIVDAFLIGC) traverse the membrane as a helical segment. Over 172–492 (MFIKMSQPKK…LRKMNSDRFT (321 aa)) the chain is Cytoplasmic. Residues 174 to 201 (IKMSQPKKRAETLMFSEHAAISMRDGKL) are polyphosphoinositide (PIP2)-binding. Residues 452–492 (SDPMSQSVADLPPKLQKLSGGGRMEGNLPPKLRKMNSDRFT) form a disordered region.

The protein belongs to the inward rectifier-type potassium channel (TC 1.A.2.1) family. KCNJ3 subfamily. In terms of assembly, associates with KCNJ5/GIRK4 or KCNJ6/GIRK2 or KCNJ9/GIRK3 to form a G-protein activated heteromultimer pore-forming unit. The resulting inward current is much larger.

It localises to the membrane. The catalysed reaction is K(+)(in) = K(+)(out). Its activity is regulated as follows. Heteromultimer composed of KCNJ3/GIRK1 and KCNJ5/GIRK4 is activated by phosphatidylinositol 4,5 biphosphate (PtdIns(4,5)P2). Inward rectifier potassium channels are characterized by a greater tendency to allow potassium to flow into the cell rather than out of it. Their voltage dependence is regulated by the concentration of extracellular potassium; as external potassium is raised, the voltage range of the channel opening shifts to more positive voltages. The inward rectification is mainly due to the blockage of outward current by internal magnesium. This potassium channel is controlled by G proteins. This receptor plays a crucial role in regulating the heartbeat. The chain is G protein-activated inward rectifier potassium channel 1 (KCNJ3) from Gallus gallus (Chicken).